Reading from the N-terminus, the 230-residue chain is Ion-translocating oxidoreductase complex subunit E (230 aa).

6 helical membrane passes run 18-38 (ALVQ…ATNA), 39-59 (LGLG…ISAL), 63-83 (TPAE…VSAV), 86-106 (LINA…PLIV), 125-145 (ALSA…MFVL), and 182-202 (PFLL…MLAV).

It belongs to the NqrDE/RnfAE family. The complex is composed of six subunits: RnfA, RnfB, RnfC, RnfD, RnfE and RnfG.

It is found in the cell inner membrane. Functionally, part of a membrane-bound complex that couples electron transfer with translocation of ions across the membrane. The chain is Ion-translocating oxidoreductase complex subunit E from Citrobacter koseri (strain ATCC BAA-895 / CDC 4225-83 / SGSC4696).